The primary structure comprises 319 residues: Major intracellular serine protease (319 aa).

Residues 1 to 17 constitute a propeptide that is removed on maturation; the sequence is MNGEIRLIPYVTNEQIM. One can recognise a Peptidase S8 domain in the interval 23–307; that stretch reads PEGIKVIKAP…FLYLTAPDEL (285 aa). Residues aspartate 50, histidine 87, and serine 246 each act as charge relay system in the active site.

The protein belongs to the peptidase S8 family. As to quaternary structure, homodimer.

The protein resides in the cytoplasm. Functionally, major intracellular protease produced by Bacillus subtilis. This chain is Major intracellular serine protease (isp), found in Bacillus subtilis (strain 168).